The primary structure comprises 734 residues: Transcription factor EMB1444 (734 aa).

Positions 537–566 (QFPTSLEIPKKNKKRAKPGESSRPRPRDRQ) are disordered. Residues 548–555 (NKKRAKPG) carry the Nuclear localization signal motif. The bHLH domain occupies 552 to 601 (AKPGESSRPRPRDRQLIQDRIKELRELVPNGSKCSIDSLLECTIKHMLFL). The segment covering 553–566 (KPGESSRPRPRDRQ) has biased composition (basic and acidic residues).

It belongs to the bHLH protein family. LHW subfamily. Homodimer.

Its subcellular location is the nucleus. Its function is as follows. Transcription factor that may regulate root development. This Arabidopsis thaliana (Mouse-ear cress) protein is Transcription factor EMB1444.